A 465-amino-acid polypeptide reads, in one-letter code: E3 ubiquitin-protein ligase parkin (465 aa).

The region spanning 1 to 76 (MIVFVRFNSS…VHIVQRPQRK (76 aa)) is the Ubiquitin-like domain. A Phosphoserine; by PINK1 modification is found at S65. The segment at 71–96 (QRPQRKSHETNASGGDKPQSTPEGSI) is disordered. The necessary for PINK1-dependent localization to mitochondria stretch occupies residues 77 to 237 (SHETNASGGD…LITNNSRSIP (161 aa)). T80 is modified (phosphothreonine). Residues 80 to 93 (TNASGGDKPQSTPE) show a composition bias toward polar residues. Residues 141 to 225 (PTYHSFFVYC…PTSDKDTSVA (85 aa)) form an RING-type 0; atypical zinc finger. The residue at position 175 (T175) is a Phosphothreonine; by PINK1. Positions 204-238 (TRAEFFFKCGAHPTSDKDTSVALNLITNNSRSIPC) are SYT11 binding 1. T217 is subject to Phosphothreonine. The interval 234 to 465 (RSIPCIACTD…ACMGDHWFDV (232 aa)) is TRIAD supradomain. Zn(2+)-binding residues include C238, C241, C253, H257, C260, C263, C289, C293, C332, and C337. An RING-type 1 zinc finger spans residues 238 to 293 (CIACTDVRNPVLVFQCNHRHVICLDCFHLYCVTRLNDRQFVHDAQLGYSLPCVAGC). Positions 257–293 (HVICLDCFHLYCVTRLNDRQFVHDAQLGYSLPCVAGC) are SYT11 binding 2. The IBR-type zinc-finger motif lies at 313–377 (NRYQQYGAEE…CKEAYHEGEC (65 aa)). K349 is covalently cross-linked (Glycyl lysine isopeptide (Lys-Gly) (interchain with G-Cter in ISG15)). Positions 352, 360, 365, and 368 each coordinate Zn(2+). A Glycyl lysine isopeptide (Lys-Gly) (interchain with G-Cter in ISG15) cross-link involves residue K369. H373 and C377 together coordinate Zn(2+). The tract at residues 378 to 410 (DSMFEASGATSQAYRVDQRAAEQARWEEASKET) is REP. Zn(2+) contacts are provided by C418 and C421. Residues 418–449 (CPRCNVPIEKNGGCMHMKCPQPQCKLEWCWNC) form an RING-type 2; atypical zinc finger. C431 is an active-site residue. Zn(2+)-binding residues include C436, C441, C446, C449, C457, and H461.

Belongs to the RBR family. Parkin subfamily. In terms of assembly, forms an E3 ubiquitin ligase complex with UBE2L3 or UBE2L6. Mediates 'Lys-63'-linked polyubiquitination by associating with UBE2V1. Part of a SCF-like complex, consisting of PRKN, CUL1 and FBXW7. Interacts with SNCAIP. Binds to the C2A and C2B domains of SYT11. Interacts and regulates the turnover of SEPTIN5. Part of a complex, including STUB1, HSP70 and GPR37. The amount of STUB1 in the complex increases during ER stress. STUB1 promotes the dissociation of HSP70 from PRKN and GPR37, thus facilitating PRKN-mediated GPR37 ubiquitination. HSP70 transiently associates with unfolded GPR37 and inhibits the E3 activity of PRKN, whereas, STUB1 enhances the E3 activity of PRKN through promotion of dissociation of HSP70 from PRKN-GPR37 complexes. Interacts with PSMD4 and PACRG. Interacts with LRRK2. Interacts with RANBP2. Interacts with SUMO1 but not SUMO2, which promotes nuclear localization and autoubiquitination. Interacts (via first RING-type domain) with AIMP2 (via N-terminus). Interacts with PSMA7 and RNF41. Interacts with PINK1. Forms a complex with PINK1 and PARK7. Interacts with CHPF, the interaction with isoform 2 may facilitate PRKN transport into the mitochondria. Interacts with MFN2 (phosphorylated), promotes PRKN localization in dysfunctional depolarized mitochondria. Interacts with FBXO7; this promotes translocation to dysfunctional depolarized mitochondria. Interacts with ZNF746. Interacts with heat shock protein 70 family members, including HSPA1L, HSPA1A and HSPA8; interaction HSPA1L promotes translocation to damaged mitochondria. Interacts with BAG4 and, to a lesser extent, BAG5; interaction with BAG4 inhibits translocation to damaged mitochondria. Forms a complex with PRKN and PARK7. Interacts with AMBRA1. Post-translationally, auto-ubiquitinates in an E2-dependent manner leading to its own degradation. Also polyubiquitinated by RNF41 for proteasomal degradation. S-nitrosylated. In terms of processing, phosphorylated. Activation requires phosphorylation at Ser-65 by PINK1 and binding to PINK1 phosphorylated ubiquitin. Phosphorylation at Thr-175 by PINK1 and at Thr-217 is important for mitochondrial localization. Largely confined to neuronal elements, including fibers and neuropil. Highly expressed at the forebrain level, in pyramidal cells of layer V, in various cortical regions and cerebellum. Expressed in the nucleus of diagonal band of Broca, nucleus basalis, bed nucleus of the stria terminalis, and olfactory tubercle. Moderate expression is seen in most neurons of the subthalamic nucleus, heart, skeletal muscle and testis. Moderate expression was found in frontal cortex, parietal cortex, cerebellum, heart, skeletal muscle and testis.

The protein resides in the cytoplasm. Its subcellular location is the cytosol. It is found in the nucleus. It localises to the endoplasmic reticulum. The protein localises to the mitochondrion. The protein resides in the mitochondrion outer membrane. Its subcellular location is the cell projection. It is found in the neuron projection. It localises to the postsynaptic density. The protein localises to the presynapse. It catalyses the reaction [E2 ubiquitin-conjugating enzyme]-S-ubiquitinyl-L-cysteine + [acceptor protein]-L-lysine = [E2 ubiquitin-conjugating enzyme]-L-cysteine + [acceptor protein]-N(6)-ubiquitinyl-L-lysine.. The protein operates within protein modification; protein ubiquitination. Its activity is regulated as follows. In the autoinhibited state the side chain of Phe-463 inserts into a hydrophobic groove in RING-0, occluding the ubiquitin acceptor site Cys-431, whereas the REP repressor element binds RING-1 and blocks its E2-binding site. Activation of PRKN requires 2 steps: (1) phosphorylation at Ser-65 by PINK1 and (2) binding to phosphorylated ubiquitin, leading to unlock repression of the catalytic Cys-431 by the RING-0 region via an allosteric mechanism and converting PRKN to its fully-active form. According to another report, phosphorylation at Ser-65 by PINK1 is not essential for activation and only binding to phosphorylated ubiquitin is essential to unlock repression. In addition, ISG15 conjugation positively regulates its ubiquitin E3 ligase activity by suppressing the intramolecular interaction that maintains its autoinhibited conformation. Functions within a multiprotein E3 ubiquitin ligase complex, catalyzing the covalent attachment of ubiquitin moieties onto substrate proteins. Substrates include SYT11 and VDAC1. Other substrates are BCL2, CCNE1, GPR37, RHOT1/MIRO1, MFN1, MFN2, STUB1, SNCAIP, SEPTIN5, TOMM20, USP30, ZNF746, MIRO1 and AIMP2. Mediates monoubiquitination as well as 'Lys-6', 'Lys-11', 'Lys-48'-linked and 'Lys-63'-linked polyubiquitination of substrates depending on the context. Participates in the removal and/or detoxification of abnormally folded or damaged protein by mediating 'Lys-63'-linked polyubiquitination of misfolded proteins such as PARK7: 'Lys-63'-linked polyubiquitinated misfolded proteins are then recognized by HDAC6, leading to their recruitment to aggresomes, followed by degradation. Mediates 'Lys-63'-linked polyubiquitination of a 22 kDa O-linked glycosylated isoform of SNCAIP, possibly playing a role in Lewy-body formation. Mediates monoubiquitination of BCL2, thereby acting as a positive regulator of autophagy. Protects against mitochondrial dysfunction during cellular stress, by acting downstream of PINK1 to coordinate mitochondrial quality control mechanisms that remove and replace dysfunctional mitochondrial components. Depending on the severity of mitochondrial damage and/or dysfunction, activity ranges from preventing apoptosis and stimulating mitochondrial biogenesis to regulating mitochondrial dynamics and eliminating severely damaged mitochondria via mitophagy. Activation and recruitment onto the outer membrane of damaged/dysfunctional mitochondria (OMM) requires PINK1-mediated phosphorylation of both PRKN and ubiquitin. After mitochondrial damage, functions with PINK1 to mediate the decision between mitophagy or preventing apoptosis by inducing either the poly- or monoubiquitination of VDAC1, respectively; polyubiquitination of VDAC1 promotes mitophagy, while monoubiquitination of VDAC1 decreases mitochondrial calcium influx which ultimately inhibits apoptosis. When cellular stress results in irreversible mitochondrial damage, promotes the autophagic degradation of dysfunctional depolarized mitochondria (mitophagy) by promoting the ubiquitination of mitochondrial proteins such as TOMM20, RHOT1/MIRO1, MFN1 and USP30. Preferentially assembles 'Lys-6'-, 'Lys-11'- and 'Lys-63'-linked polyubiquitin chains, leading to mitophagy. The PINK1-PRKN pathway also promotes fission of damaged mitochondria by PINK1-mediated phosphorylation which promotes the PRKN-dependent degradation of mitochondrial proteins involved in fission such as MFN2. This prevents the refusion of unhealthy mitochondria with the mitochondrial network or initiates mitochondrial fragmentation facilitating their later engulfment by autophagosomes. Regulates motility of damaged mitochondria via the ubiquitination and subsequent degradation of MIRO1 and MIRO2; in motor neurons, this likely inhibits mitochondrial intracellular anterograde transport along the axons which probably increases the chance of the mitochondria undergoing mitophagy in the soma. Involved in mitochondrial biogenesis via the 'Lys-48'-linked polyubiquitination of transcriptional repressor ZNF746/PARIS which leads to its subsequent proteasomal degradation and allows activation of the transcription factor PPARGC1A. Limits the production of reactive oxygen species (ROS). Regulates cyclin-E during neuronal apoptosis. In collaboration with CHPF isoform 2, may enhance cell viability and protect cells from oxidative stress. Independently of its ubiquitin ligase activity, protects from apoptosis by the transcriptional repression of p53/TP53. May protect neurons against alpha synuclein toxicity, proteasomal dysfunction, GPR37 accumulation, and kainate-induced excitotoxicity. May play a role in controlling neurotransmitter trafficking at the presynaptic terminal and in calcium-dependent exocytosis. May represent a tumor suppressor gene. The chain is E3 ubiquitin-protein ligase parkin from Rattus norvegicus (Rat).